The chain runs to 147 residues: Mitochondrial import receptor subunit TOM20 homolog (147 aa).

Residues 1-3 (MVV) are Mitochondrial intermembrane-facing. The helical transmembrane segment at 4–26 (VGKTSAIAAGVCGALFLGYCIYF) threads the bilayer. At 27–147 (DRKRRSDPNF…AQNLAEDDVE (121 aa)) the chain is on the cytoplasmic side.

It belongs to the Tom20 family. As to quaternary structure, forms part of the preprotein translocase complex of the outer mitochondrial membrane (TOM complex). Interacts with tom22.

Its subcellular location is the mitochondrion outer membrane. Functionally, central component of the receptor complex responsible for the recognition and translocation of cytosolically synthesized mitochondrial preproteins. Together with tom22 functions as the transit peptide receptor at the surface of the mitochondrion outer membrane and facilitates the movement of preproteins into the tom40 translocation pore. The chain is Mitochondrial import receptor subunit TOM20 homolog (tomm20) from Xenopus tropicalis (Western clawed frog).